The following is a 348-amino-acid chain: S-adenosyl-L-methionine-dependent methyl transferase PigF (348 aa).

S-adenosyl-L-methionine is bound at residue E199. Catalysis depends on H247, which acts as the Proton acceptor.

The protein belongs to the class I-like SAM-binding methyltransferase superfamily. Cation-independent O-methyltransferase family.

It functions in the pathway antibiotic biosynthesis; prodigiosin biosynthesis. Its function is as follows. Involved in the biosynthesis of 4-methoxy-2,2'-bipyrrole-5-carbaldehyde (MBC), one of the terminal products involved in the biosynthesis of the red antibiotic prodigiosin (Pig). Catalyzes the transfer of a methyl group from S-adenosyl-L-methionine (SAM) to the hydroxyl group of 4-hydroxy-2,2'-bipyrrole-5-carbaldehyde (HBC) to yield 4-methoxy-2,2'-bipyrrole-5-carbaldehyde (MBC). This Serratia sp. (strain ATCC 39006) (Prodigiosinella confusarubida) protein is S-adenosyl-L-methionine-dependent methyl transferase PigF.